Reading from the N-terminus, the 480-residue chain is Proline--tRNA ligase (480 aa).

This sequence belongs to the class-II aminoacyl-tRNA synthetase family. ProS type 3 subfamily. As to quaternary structure, homodimer.

Its subcellular location is the cytoplasm. It catalyses the reaction tRNA(Pro) + L-proline + ATP = L-prolyl-tRNA(Pro) + AMP + diphosphate. Functionally, catalyzes the attachment of proline to tRNA(Pro) in a two-step reaction: proline is first activated by ATP to form Pro-AMP and then transferred to the acceptor end of tRNA(Pro). The sequence is that of Proline--tRNA ligase from Chloroflexus aurantiacus (strain ATCC 29364 / DSM 637 / Y-400-fl).